A 291-amino-acid polypeptide reads, in one-letter code: Homoserine kinase (291 aa).

80–90 (RPASGLGSSAA) is a binding site for ATP.

It belongs to the GHMP kinase family. Homoserine kinase subfamily.

It localises to the cytoplasm. The enzyme catalyses L-homoserine + ATP = O-phospho-L-homoserine + ADP + H(+). Its pathway is amino-acid biosynthesis; L-threonine biosynthesis; L-threonine from L-aspartate: step 4/5. Functionally, catalyzes the ATP-dependent phosphorylation of L-homoserine to L-homoserine phosphate. In Natronomonas pharaonis (strain ATCC 35678 / DSM 2160 / CIP 103997 / JCM 8858 / NBRC 14720 / NCIMB 2260 / Gabara) (Halobacterium pharaonis), this protein is Homoserine kinase.